The chain runs to 402 residues: S-adenosylmethionine synthase (402 aa).

137–142 lines the ATP pocket; sequence GQGSAD.

Belongs to the AdoMet synthase 2 family. Mg(2+) serves as cofactor.

It catalyses the reaction L-methionine + ATP + H2O = S-adenosyl-L-methionine + phosphate + diphosphate. It participates in amino-acid biosynthesis; S-adenosyl-L-methionine biosynthesis; S-adenosyl-L-methionine from L-methionine: step 1/1. In terms of biological role, catalyzes the formation of S-adenosylmethionine from methionine and ATP. This is S-adenosylmethionine synthase from Pyrobaculum aerophilum (strain ATCC 51768 / DSM 7523 / JCM 9630 / CIP 104966 / NBRC 100827 / IM2).